A 363-amino-acid chain; its full sequence is 3-isopropylmalate dehydrogenase (363 aa).

79–92 (GPKWEHLPPNDQPE) is an NAD(+) binding site. Residues arginine 100, arginine 110, arginine 139, and aspartate 228 each coordinate substrate. Mg(2+)-binding residues include aspartate 228, aspartate 252, and aspartate 256. Residue 286–298 (GSAPDIAGKNIAN) participates in NAD(+) binding.

Belongs to the isocitrate and isopropylmalate dehydrogenases family. LeuB type 1 subfamily. Homodimer. Mg(2+) is required as a cofactor. Mn(2+) serves as cofactor.

Its subcellular location is the cytoplasm. The catalysed reaction is (2R,3S)-3-isopropylmalate + NAD(+) = 4-methyl-2-oxopentanoate + CO2 + NADH. The protein operates within amino-acid biosynthesis; L-leucine biosynthesis; L-leucine from 3-methyl-2-oxobutanoate: step 3/4. Functionally, catalyzes the oxidation of 3-carboxy-2-hydroxy-4-methylpentanoate (3-isopropylmalate) to 3-carboxy-4-methyl-2-oxopentanoate. The product decarboxylates to 4-methyl-2 oxopentanoate. This is 3-isopropylmalate dehydrogenase from Vibrio vulnificus (strain YJ016).